Here is a 2839-residue protein sequence, read N- to C-terminus: Bifunctional DNA-directed RNA polymerase subunit beta-beta' (2839 aa).

Residues 1–1433 are DNA-directed RNA polymerase subunit beta; that stretch reads MVDSSYMCAS…CLNVALKQNN (1433 aa). The interval 1436 to 2839 is DNA-directed RNA polymerase subunit beta'; sequence IEDISHTNIA…KESVAESRYN (1404 aa). Residues Cys-1501, Cys-1503, Cys-1516, and Cys-1519 each coordinate Zn(2+). Asp-1893, Asp-1895, and Asp-1897 together coordinate Mg(2+). Cys-2238, Cys-2312, Cys-2319, and Cys-2322 together coordinate Zn(2+).

In the N-terminal section; belongs to the RNA polymerase beta chain family. It in the C-terminal section; belongs to the RNA polymerase beta' chain family. In terms of assembly, the RNAP catalytic core consists of 2 alpha, 1 beta/beta' and 1 omega subunit. When a sigma factor is associated with the core the holoenzyme is formed, which can initiate transcription. Requires Mg(2+) as cofactor. Zn(2+) is required as a cofactor.

The catalysed reaction is RNA(n) + a ribonucleoside 5'-triphosphate = RNA(n+1) + diphosphate. DNA-dependent RNA polymerase catalyzes the transcription of DNA into RNA using the four ribonucleoside triphosphates as substrates. The sequence is that of Bifunctional DNA-directed RNA polymerase subunit beta-beta' (rpoBC) from Wolbachia sp. subsp. Brugia malayi (strain TRS).